The chain runs to 324 residues: MAYVPAPGYQPTYNPTLPYKRPIPGGLSVGMSIYIQGIAKDNMRRFHVNFAVGQDEGADIAFHFNPRFDGWDKVVFNTMQSGQWGKEEKKKSMPFQKGHHFELVFMVMSEHYKVVVNGTPFYEYGHRLPLQMVTHLQVDGDLELQSINFLGGQPAASQYPGTMTIPAYPSAGYNPPQMNSLPVMAGPPIFNPPVPYVGTLQGGLTARRTIIIKGYVLPTAKNLIINFKVGSTGDIAFHMNPRIGDCVVRNSYMNGSWGSEERKIPYNPFGAGQFFDLSIRCGTDRFKVFANGQHLFDFSHRFQAFQRVDMLEIKGDITLSYVQI.

Galectin domains follow at residues 19-150 (YKRP…INFL) and 196-324 (YVGT…YVQI). 257 to 263 (WGSEERK) contributes to the a beta-D-galactoside binding site. S259 carries the post-translational modification Phosphoserine.

Monomer. As to expression, highly expressed in full-length form in small and large intestine and stomach but was not detected in other tissues including lung, liver, kidney and spleen.

Galectin that binds lactose and a related range of sugars. This Rattus norvegicus (Rat) protein is Galectin-4 (Lgals4).